A 416-amino-acid chain; its full sequence is Phosphatidylinositol 5-phosphate 4-kinase type-2 beta (416 aa).

N-acetylserine is present on S2. T8 carries the phosphothreonine modification. A Phosphoserine modification is found at S19. Positions 38-415 (ASEPILSVLM…RFNEFMSNIL (378 aa)) constitute a PIPK domain. The interval 64-70 (VMLMPDD) is required for interaction with PIP5K1A. 2 positions are modified to N6-acetyllysine: K94 and K150. ATP contacts are provided by residues 202–204 (RNV) and K214. GTP contacts are provided by residues 203 to 204 (NV) and K214. Position 322 is a phosphothreonine (T322). Residue S326 is modified to Phosphoserine. Residue D369 participates in GTP binding.

In terms of assembly, homodimer. Binds TNFRSF1A. Interacts with PIP4K2A; the interaction suppresses ubiquitination by the SPOP/CUL3 complex. Post-translationally, ubiquitinated by the SPOP/CUL3 complex. Ubiquitination is stimulated by PtdIns5P levels. Phosphorylated on serine residues. As to expression, highly expressed in brain, heart, pancreas, skeletal muscle and kidney. Detected at lower levels in placenta, lung and liver.

It is found in the endoplasmic reticulum membrane. It localises to the cell membrane. The protein resides in the nucleus. The protein localises to the cytoplasm. It catalyses the reaction a 1,2-diacyl-sn-glycero-3-phospho-(1D-myo-inositol-5-phosphate) + ATP = a 1,2-diacyl-sn-glycero-3-phospho-(1D-myo-inositol-4,5-bisphosphate) + ADP + H(+). The enzyme catalyses 1,2-dihexadecanoyl-sn-glycero-3-phospho-(1D-myo-inositol-5-phosphate) + ATP = 1,2-dihexadecanoyl-sn-glycero-3-phospho-(1D-myo-inositol-4,5-bisphosphate) + ADP + H(+). It carries out the reaction 1,2-dihexadecanoyl-sn-glycero-3-phospho-(1D-myo-inositol-5-phosphate) + GTP = 1,2-dihexadecanoyl-sn-glycero-3-phospho-(1D-myo-inositol-4,5-bisphosphate) + GDP + H(+). In terms of biological role, participates in the biosynthesis of phosphatidylinositol 4,5-bisphosphate. Preferentially utilizes GTP, rather than ATP, for PI(5)P phosphorylation and its activity reflects changes in direct proportion to the physiological GTP concentration. Its GTP-sensing activity is critical for metabolic adaptation. PIP4Ks negatively regulate insulin signaling through a catalytic-independent mechanism. They interact with PIP5Ks and suppress PIP5K-mediated PtdIns(4,5)P2 synthesis and insulin-dependent conversion to PtdIns(3,4,5)P3. This chain is Phosphatidylinositol 5-phosphate 4-kinase type-2 beta, found in Homo sapiens (Human).